A 559-amino-acid chain; its full sequence is 5'-AMP-activated protein kinase catalytic subunit alpha-1 (559 aa).

Residues 27–279 (YILGDTLGVG…IKDIREHEWF (253 aa)) enclose the Protein kinase domain. A Phosphothreonine modification is found at Thr-32. Residues 33-41 (LGVGTFGKV) and Lys-56 each bind ATP. Asp-150 functions as the Proton acceptor in the catalytic mechanism. Thr-183 carries the post-translational modification Phosphothreonine; by LKB1 and CaMKK2. The tract at residues 302 to 381 (EALKEVCEKF…PERVPFLVAE (80 aa)) is AIS. Residue Thr-355 is modified to Phosphothreonine. Ser-356 is modified (phosphoserine). Residue Ser-360 is modified to Phosphoserine; by ULK1. Position 368 is a phosphothreonine; by ULK1 (Thr-368). Position 382 is a phosphothreonine (Thr-382). Residue Ser-397 is modified to Phosphoserine; by ULK1. Residues Ser-467 and Ser-486 each carry the phosphoserine modification. Residues 485–505 (KSGTATPQRSGSISNYRSCQR) are compositionally biased toward polar residues. The tract at residues 485 to 536 (KSGTATPQRSGSISNYRSCQRSDSDAEAQGKPSDVSLTSSVTSLDSSPVDVA) is disordered. Thr-488 carries the phosphothreonine; by ULK1 modification. Thr-490 is modified (phosphothreonine). A phosphoserine mark is found at Ser-496, Ser-508, Ser-524, and Ser-527. A compositionally biased stretch (low complexity) spans 516–535 (PSDVSLTSSVTSLDSSPVDV).

The protein belongs to the protein kinase superfamily. CAMK Ser/Thr protein kinase family. SNF1 subfamily. As to quaternary structure, AMPK is a heterotrimer of an alpha catalytic subunit (PRKAA1 or PRKAA2), a beta (PRKAB1 or PRKAB2) and a gamma non-catalytic subunits (PRKAG1, PRKAG2 or PRKAG3). Interacts with FNIP1 and FNIP2. It depends on Mg(2+) as a cofactor. In terms of processing, phosphorylated at Thr-183 by STK11/LKB1 in complex with STE20-related adapter-alpha (STRADA) pseudo kinase and CAB39. Also phosphorylated at Thr-183 by CAMKK2; triggered by a rise in intracellular calcium ions, without detectable changes in the AMP/ATP ratio. CAMKK1 can also phosphorylate Thr-183, but at a much lower level. Dephosphorylated by protein phosphatase 2A and 2C (PP2A and PP2C). Phosphorylated by ULK1 and ULK2; leading to negatively regulate AMPK activity and suggesting the existence of a regulatory feedback loop between ULK1, ULK2 and AMPK. Dephosphorylated by PPM1A and PPM1B. Ubiquitinated. Post-translationally, glycosylated; O-GlcNAcylated by OGT, promoting the AMP-activated protein kinase (AMPK) activity.

Its subcellular location is the cytoplasm. It localises to the nucleus. It carries out the reaction L-seryl-[protein] + ATP = O-phospho-L-seryl-[protein] + ADP + H(+). The catalysed reaction is L-threonyl-[protein] + ATP = O-phospho-L-threonyl-[protein] + ADP + H(+). It catalyses the reaction L-seryl-[acetyl-CoA carboxylase] + ATP = O-phospho-L-seryl-[acetyl-CoA carboxylase] + ADP + H(+). The enzyme catalyses L-seryl-[3-hydroxy-3-methylglutaryl-coenzyme A reductase] + ATP = O-phospho-L-seryl-[3-hydroxy-3-methylglutaryl-coenzyme A reductase] + ADP + H(+). It carries out the reaction L-seryl-[tau protein] + ATP = O-phospho-L-seryl-[tau protein] + ADP + H(+). The catalysed reaction is L-threonyl-[tau protein] + ATP = O-phospho-L-threonyl-[tau protein] + ADP + H(+). Its activity is regulated as follows. Activated by phosphorylation on Thr-183. Binding of AMP to non-catalytic gamma subunit (PRKAG1, PRKAG2 or PRKAG3) results in allosteric activation, inducing phosphorylation on Thr-183. AMP-binding to gamma subunit also sustains activity by preventing dephosphorylation of Thr-183. ADP also stimulates Thr-183 phosphorylation, without stimulating already phosphorylated AMPK. ATP promotes dephosphorylation of Thr-183, rendering the enzyme inactive. Under physiological conditions AMPK mainly exists in its inactive form in complex with ATP, which is much more abundant than AMP. Selectively inhibited by compound C (6-[4-(2-Piperidin-1-yl-ethoxy)-phenyl)]-3-pyridin-4-yl-pyyrazolo[1,5-a] pyrimidine. Activated by resveratrol, a natural polyphenol present in red wine, and S17834, a synthetic polyphenol. Catalytic subunit of AMP-activated protein kinase (AMPK), an energy sensor protein kinase that plays a key role in regulating cellular energy metabolism. In response to reduction of intracellular ATP levels, AMPK activates energy-producing pathways and inhibits energy-consuming processes: inhibits protein, carbohydrate and lipid biosynthesis, as well as cell growth and proliferation. AMPK acts via direct phosphorylation of metabolic enzymes, and by longer-term effects via phosphorylation of transcription regulators. Regulates lipid synthesis by phosphorylating and inactivating lipid metabolic enzymes such as ACACA, ACACB, GYS1, HMGCR and LIPE; regulates fatty acid and cholesterol synthesis by phosphorylating acetyl-CoA carboxylase (ACACA and ACACB) and hormone-sensitive lipase (LIPE) enzymes, respectively. Promotes lipolysis of lipid droplets by mediating phosphorylation of isoform 1 of CHKA (CHKalpha2). Regulates insulin-signaling and glycolysis by phosphorylating IRS1, PFKFB2 and PFKFB3. AMPK stimulates glucose uptake in muscle by increasing the translocation of the glucose transporter SLC2A4/GLUT4 to the plasma membrane, possibly by mediating phosphorylation of TBC1D4/AS160. Regulates transcription and chromatin structure by phosphorylating transcription regulators involved in energy metabolism such as CRTC2/TORC2, FOXO3, histone H2B, HDAC5, MEF2C, MLXIPL/ChREBP, EP300, HNF4A, p53/TP53, SREBF1, SREBF2 and PPARGC1A. Acts as a key regulator of glucose homeostasis in liver by phosphorylating CRTC2/TORC2, leading to CRTC2/TORC2 sequestration in the cytoplasm. In response to stress, phosphorylates 'Ser-36' of histone H2B (H2BS36ph), leading to promote transcription. Acts as a key regulator of cell growth and proliferation by phosphorylating FNIP1, TSC2, RPTOR, WDR24 and ATG1/ULK1: in response to nutrient limitation, negatively regulates the mTORC1 complex by phosphorylating RPTOR component of the mTORC1 complex and by phosphorylating and activating TSC2. Also phosphorylates and inhibits GATOR2 subunit WDR24 in response to nutrient limitation, leading to suppress glucose-mediated mTORC1 activation. In response to energetic stress, phosphorylates FNIP1, inactivating the non-canonical mTORC1 signaling, thereby promoting nuclear translocation of TFEB and TFE3, and inducing transcription of lysosomal or autophagy genes. In response to nutrient limitation, promotes autophagy by phosphorylating and activating ATG1/ULK1. In that process, it also activates WDR45/WIPI4. Phosphorylates CASP6, thereby preventing its autoprocessing and subsequent activation. In response to nutrient limitation, phosphorylates transcription factor FOXO3 promoting FOXO3 mitochondrial import. Also acts as a regulator of cellular polarity by remodeling the actin cytoskeleton; probably by indirectly activating myosin. AMPK also acts as a regulator of circadian rhythm by mediating phosphorylation of CRY1, leading to destabilize it. May regulate the Wnt signaling pathway by phosphorylating CTNNB1, leading to stabilize it. Also has tau-protein kinase activity: in response to amyloid beta A4 protein (APP) exposure, activated by CAMKK2, leading to phosphorylation of MAPT/TAU; however the relevance of such data remains unclear in vivo. Also phosphorylates CFTR, EEF2K, KLC1, NOS3 and SLC12A1. Regulates hepatic lipogenesis. Activated via SIRT3, represses sterol regulatory element-binding protein (SREBP) transcriptional activities and ATP-consuming lipogenesis to restore cellular energy balance. Upon stress, regulates mitochondrial fragmentation through phosphorylation of MTFR1L. This Mus musculus (Mouse) protein is 5'-AMP-activated protein kinase catalytic subunit alpha-1 (Prkaa1).